The sequence spans 413 residues: Multifunctional CCA protein (413 aa).

The ATP site is built by Gly-8 and Arg-11. CTP is bound by residues Gly-8 and Arg-11. The Mg(2+) site is built by Asp-21 and Asp-23. Residues Arg-91, Arg-143, and Arg-146 each contribute to the ATP site. CTP contacts are provided by Arg-91, Arg-143, and Arg-146. The HD domain maps to 232–333; that stretch reads TGVHVMMVID…VRLLERADAL (102 aa).

The protein belongs to the tRNA nucleotidyltransferase/poly(A) polymerase family. Bacterial CCA-adding enzyme type 1 subfamily. In terms of assembly, monomer. Can also form homodimers and oligomers. It depends on Mg(2+) as a cofactor. Requires Ni(2+) as cofactor.

It catalyses the reaction a tRNA precursor + 2 CTP + ATP = a tRNA with a 3' CCA end + 3 diphosphate. It carries out the reaction a tRNA with a 3' CCA end + 2 CTP + ATP = a tRNA with a 3' CCACCA end + 3 diphosphate. Catalyzes the addition and repair of the essential 3'-terminal CCA sequence in tRNAs without using a nucleic acid template. Adds these three nucleotides in the order of C, C, and A to the tRNA nucleotide-73, using CTP and ATP as substrates and producing inorganic pyrophosphate. tRNA 3'-terminal CCA addition is required both for tRNA processing and repair. Also involved in tRNA surveillance by mediating tandem CCA addition to generate a CCACCA at the 3' terminus of unstable tRNAs. While stable tRNAs receive only 3'-terminal CCA, unstable tRNAs are marked with CCACCA and rapidly degraded. The polypeptide is Multifunctional CCA protein (Burkholderia mallei (strain NCTC 10247)).